The following is a 415-amino-acid chain: Esterase FrsA (415 aa).

It belongs to the FrsA family.

It carries out the reaction a carboxylic ester + H2O = an alcohol + a carboxylate + H(+). In terms of biological role, catalyzes the hydrolysis of esters. The protein is Esterase FrsA of Yersinia enterocolitica serotype O:8 / biotype 1B (strain NCTC 13174 / 8081).